A 454-amino-acid polypeptide reads, in one-letter code: Bifunctional protein GlmU (454 aa).

Residues 1-226 form a pyrophosphorylase region; the sequence is MALNVVILAA…AIEVEGANNR (226 aa). UDP-N-acetyl-alpha-D-glucosamine-binding positions include 8-11, Lys-22, Gln-73, 78-79, 100-102, Gly-137, Glu-151, Asn-166, and Asn-224; these read LAAG, GT, and YGD. A Mg(2+)-binding site is contributed by Asp-102. Asn-224 lines the Mg(2+) pocket. The tract at residues 227-247 is linker; that stretch reads VQLAQLERAYQAREAEKLMLA. The tract at residues 248–454 is N-acetyltransferase; it reads GANLRDPHRI…DWKRPVKIKK (207 aa). UDP-N-acetyl-alpha-D-glucosamine is bound by residues Arg-330 and Lys-348. His-360 (proton acceptor) is an active-site residue. UDP-N-acetyl-alpha-D-glucosamine is bound by residues Tyr-363 and Asn-374. Residues Ala-377, 383–384, Ser-402, Ala-420, and Arg-437 each bind acetyl-CoA; that span reads NY.

It in the N-terminal section; belongs to the N-acetylglucosamine-1-phosphate uridyltransferase family. In the C-terminal section; belongs to the transferase hexapeptide repeat family. As to quaternary structure, homotrimer. Mg(2+) is required as a cofactor.

The protein localises to the cytoplasm. The catalysed reaction is alpha-D-glucosamine 1-phosphate + acetyl-CoA = N-acetyl-alpha-D-glucosamine 1-phosphate + CoA + H(+). The enzyme catalyses N-acetyl-alpha-D-glucosamine 1-phosphate + UTP + H(+) = UDP-N-acetyl-alpha-D-glucosamine + diphosphate. Its pathway is nucleotide-sugar biosynthesis; UDP-N-acetyl-alpha-D-glucosamine biosynthesis; N-acetyl-alpha-D-glucosamine 1-phosphate from alpha-D-glucosamine 6-phosphate (route II): step 2/2. It participates in nucleotide-sugar biosynthesis; UDP-N-acetyl-alpha-D-glucosamine biosynthesis; UDP-N-acetyl-alpha-D-glucosamine from N-acetyl-alpha-D-glucosamine 1-phosphate: step 1/1. It functions in the pathway bacterial outer membrane biogenesis; LPS lipid A biosynthesis. In terms of biological role, catalyzes the last two sequential reactions in the de novo biosynthetic pathway for UDP-N-acetylglucosamine (UDP-GlcNAc). The C-terminal domain catalyzes the transfer of acetyl group from acetyl coenzyme A to glucosamine-1-phosphate (GlcN-1-P) to produce N-acetylglucosamine-1-phosphate (GlcNAc-1-P), which is converted into UDP-GlcNAc by the transfer of uridine 5-monophosphate (from uridine 5-triphosphate), a reaction catalyzed by the N-terminal domain. This is Bifunctional protein GlmU from Shewanella putrefaciens (strain CN-32 / ATCC BAA-453).